We begin with the raw amino-acid sequence, 96 residues long: Cysteine proteinase (96 aa).

A disulfide bond links cysteine 25 and cysteine 79. Residues histidine 31 and asparagine 58 contribute to the active site.

Belongs to the peptidase C1 family.

This chain is Cysteine proteinase, found in Carica papaya (Papaya).